The chain runs to 86 residues: Small nuclear ribonucleoprotein F (86 aa).

An N-acetylserine modification is found at Ser-2. The region spanning 6-78 is the Sm domain; the sequence is NPKPFLNGLT…VLYIRGVEEE (73 aa).

The protein belongs to the snRNP Sm proteins family. SmF/LSm6 subfamily. In terms of assembly, core component of the spliceosomal U1, U2, U4 and U5 small nuclear ribonucleoproteins (snRNPs), the building blocks of the spliceosome. Most spliceosomal snRNPs contain a common set of Sm proteins, SNRPB, SNRPD1, SNRPD2, SNRPD3, SNRPE, SNRPF and SNRPG that assemble in a heptameric protein ring on the Sm site of the small nuclear RNA to form the core snRNP. Component of the U1 snRNP. The U1 snRNP is composed of the U1 snRNA and the 7 core Sm proteins SNRPB, SNRPD1, SNRPD2, SNRPD3, SNRPE, SNRPF and SNRPG, and at least three U1 snRNP-specific proteins SNRNP70/U1-70K, SNRPA/U1-A and SNRPC/U1-C. Component of the U4/U6-U5 tri-snRNP complex composed of the U4, U6 and U5 snRNAs and at least PRPF3, PRPF4, PRPF6, PRPF8, PRPF31, SNRNP200, TXNL4A, SNRNP40, SNRPB, SNRPD1, SNRPD2, SNRPD3, SNRPE, SNRPF, SNRPG, DDX23, CD2BP2, PPIH, SNU13, EFTUD2, SART1 and USP39, plus LSM2, LSM3, LSM4, LSM5, LSM6, LSM7 and LSM8. Component of the U7 snRNP complex, or U7 Sm protein core complex, that is composed of the U7 snRNA and at least LSM10, LSM11, SNRPB, SNRPD3, SNRPE, SNRPF and SNRPG; the complex does not contain SNRPD1 and SNRPD2. Component of the minor spliceosome, which splices U12-type introns. Part of the SMN-Sm complex that contains SMN1, GEMIN2/SIP1, DDX20/GEMIN3, GEMIN4, GEMIN5, GEMIN6, GEMIN7, GEMIN8, STRAP/UNRIP and the Sm proteins SNRPB, SNRPD1, SNRPD2, SNRPD3, SNRPE, SNRPF and SNRPG; catalyzes core snRNPs assembly. Forms a 6S pICln-Sm complex composed of CLNS1A/pICln, SNRPD1, SNRPD2, SNRPE, SNRPF and SNRPG; ring-like structure where CLNS1A/pICln mimics additional Sm proteins and which is unable to assemble into the core snRNP. Interacts with GEMIN2 (via N-terminus); the interaction is direct. Interacts with SNRPD2; the interaction is direct. Interacts with SNRPE; the interaction is direct.

Its subcellular location is the cytoplasm. The protein resides in the cytosol. The protein localises to the nucleus. Its function is as follows. Plays a role in pre-mRNA splicing as a core component of the spliceosomal U1, U2, U4 and U5 small nuclear ribonucleoproteins (snRNPs), the building blocks of the spliceosome. Component of both the pre-catalytic spliceosome B complex and activated spliceosome C complexes. As a component of the minor spliceosome, involved in the splicing of U12-type introns in pre-mRNAs. As part of the U7 snRNP it is involved in histone 3'-end processing. This is Small nuclear ribonucleoprotein F (SNRPF) from Homo sapiens (Human).